Here is a 400-residue protein sequence, read N- to C-terminus: Iron(III) enterobactin esterase (400 aa).

This sequence belongs to the Fes family. As to quaternary structure, monomer.

The protein localises to the cytoplasm. The enzyme catalyses Fe(III)-enterobactin + 3 H2O + H(+) = Fe(III)-[N-(2,3-dihydroxybenzoyl)-L-serine] + 2 N-(2,3-dihydroxybenzoyl)-L-serine. The catalysed reaction is Fe(III)-enterobactin + H2O = Fe(III)-[N-(2,3-dihydroxybenzoyl)-L-serine]3 + H(+). It carries out the reaction Fe(III)-[N-(2,3-dihydroxybenzoyl)-L-serine]3 + H2O + H(+) = Fe(III)-[N-(2,3-dihydroxybenzoyl)-L-serine]2 + N-(2,3-dihydroxybenzoyl)-L-serine. It catalyses the reaction Fe(III)-[N-(2,3-dihydroxybenzoyl)-L-serine]2 + H2O + H(+) = Fe(III)-[N-(2,3-dihydroxybenzoyl)-L-serine] + N-(2,3-dihydroxybenzoyl)-L-serine. The enzyme catalyses enterobactin + 3 H2O = 3 N-(2,3-dihydroxybenzoyl)-L-serine + 2 H(+). Its activity is regulated as follows. Inhibited by N-ethylmaleimide. Catalyzes the hydrolysis of ferric enterobactin (Fe-Ent). Is responsible for the release of iron from ferric enterobactin. Also catalyzes the hydrolysis of iron-free enterobactin (Ent). Cleavage of ferric enterobactin results in a mixture of three hydrolysis products, 2,3-dihydroxybenzoylserine (DHBS), the linear dimer (DHBS)2 and the linear trimer (DHBS)3, while cleavage of iron-free enterobactin yields only the monomer. Hydrolysis of ferric enterobactin is less efficient than hydrolysis of unliganded enterobactin. It also cleaves the aluminum (III) complex at a rate similar to the ferric complex. This is Iron(III) enterobactin esterase from Escherichia coli (strain K12).